A 1055-amino-acid chain; its full sequence is Endo-1,4-beta-xylanase A (1055 aa).

Positions 1-29 (MRKKRRGFLNASTAVLVGILAGFLGVVLA) are cleaved as a signal peptide. Residues 30–357 (ATGALGFAVR…TTSAEIKLEM (328 aa)) are a. One can recognise a GH10 domain in the interval 360 to 688 (EEEIPALKDV…KLAYWAIVAP (329 aa)). Glu498 functions as the Proton donor in the catalytic mechanism. Catalysis depends on Glu604, which acts as the Nucleophile. CBM-cenC domains lie at 720 to 851 (PIEI…TNSQ) and 895 to 1040 (KSVA…PTNN).

This sequence belongs to the glycosyl hydrolase 10 (cellulase F) family.

It carries out the reaction Endohydrolysis of (1-&gt;4)-beta-D-xylosidic linkages in xylans.. This chain is Endo-1,4-beta-xylanase A (xynA), found in Thermotoga neapolitana.